Here is a 501-residue protein sequence, read N- to C-terminus: MCPVTTFLVLVLTLLVLVYVFLTWNFNYWRKRGIKTAPTWPFVGSFPSIFTRKRNIAYDIDDIYEKYKDTDNMVGVFTTRVPQLLVMCPEYIHKIYATDFRSFHNNEWRNFVNKKTDMILGNNPFVLTGDEWKERRSEIMPALSPNRVKAVYPVSQSVCKKFVEYIRRQQQMATSEGLDAMDLSLCYTTEVVSDCGLGVSAQSFTDTPTPLLKMIKRVFNTSFEFIFYSVVTNLWQKVRKFYSVPFFNKETEVFFLDIIRRCITLRLEKPEQQRDDFLNYMLQLQEKKGLHTDNILINTMTFILDGFETTALVLAHIMLMLGRNPEEQDKVRKEIGSADLTFDQMSELPHLDACIYETLRLFSPQVAARKLVTEPFEFANKNGRTVHLKPGDVVTIPVKALHHDPQYYEDPLTFKPERFLESNGGGMKSYRDRGVYLAFGDGPRHCPGMRFALTQLKAALVEILRNFEIKVNPKTRSDNQIDDTFFMATLKGGIYLDFKDL.

Cysteine 446 contacts heme.

Belongs to the cytochrome P450 family. The cofactor is heme.

The protein resides in the endoplasmic reticulum membrane. Its subcellular location is the microsome membrane. In terms of biological role, may be involved in the metabolism of insect hormones and in the breakdown of synthetic insecticides. This Drosophila melanogaster (Fruit fly) protein is Probable cytochrome P450 28d2 (Cyp28d2).